An 860-amino-acid polypeptide reads, in one-letter code: Leucine-rich repeat and death domain-containing protein 1 (860 aa).

The interval 1–103 (MSEKEGMSEV…TGTSQSLSSL (103 aa)) is disordered. Positions 50 to 72 (KSSNQIYETHPRQNTLESTSSSG) are enriched in polar residues. Low complexity predominate over residues 90–103 (TSTRTGTSQSLSSL). LRR repeat units follow at residues 139–163 (LGAD…ILKI), 164–186 (KYVK…DSGD), 187–210 (LLGL…IQLL), 211–233 (HNLR…ISQL), 235–256 (NIRQ…LECL), 257–279 (GNLE…LPSL), 281–302 (TLRV…LCFL), 303–325 (PKLI…IREL), 326–348 (KNLE…IFQL), 350–371 (KIKE…IENF), 372–394 (RELR…ISCC), 396–417 (MLEC…IHKL), 419–440 (NLRK…ISHL), 441–463 (NNIC…IKNC), 465–486 (KIIK…LCAL), 487–510 (DSLY…SFSK), 512–532 (LLHL…FCSL), 533–555 (INLK…ISNM), 557–578 (SLHV…LCTL), 579–601 (ENLQ…ICNL), 603–624 (GIQK…LCQL), 627–650 (LEQL…LSNM), 651–673 (TQLK…IGEL), 675–696 (NLVS…LLSL), 697–719 (NDLQ…IYNI), and 721–742 (SLKE…ICKG). The Death domain maps to 764-852 (EKIFKIVANN…EIMDKITALN (89 aa)). The stretch at 856-860 (RAIKF) is one LRR 27 repeat.

In Homo sapiens (Human), this protein is Leucine-rich repeat and death domain-containing protein 1 (LRRD1).